Here is a 927-residue protein sequence, read N- to C-terminus: Small conductance calcium-activated potassium channel protein (927 aa).

Polar residues predominate over residues Met1–Ser31. Disordered regions lie at residues Met1 to Glu131, Leu181 to Ala251, and His296 to Thr336. Low complexity predominate over residues Ser45–Ser62. A compositionally biased stretch (gly residues) spans Val63–Ala77. 2 stretches are compositionally biased toward polar residues: residues Thr95–His107 and Asn200–Pro214. Low complexity-rich tracts occupy residues Ser219–Ser232 and His296–Gln308. Polar residues predominate over residues Ile314 to Thr336. Residues Ala489–Ala509 traverse the membrane as a helical segment. The chain crosses the membrane as a helical span at residues Thr530–Ile550. A helical membrane pass occupies residues Ile569–Trp589. A helical transmembrane segment spans residues Val609–His629. A helical membrane pass occupies residues Leu658 to Ala678. The pore-forming intramembrane region spans Leu696–Val716. The helical transmembrane segment at Gly724–Val744 threads the bilayer. The calmodulin-binding stretch occupies residues Asp763–Thr839.

This sequence belongs to the potassium channel KCNN family. SK subfamily. In terms of assembly, heterooligomer. The complex is composed of 4 channel subunits each of which binds to a calmodulin subunit which regulates the channel activity through calcium-binding.

It is found in the membrane. Its function is as follows. Forms a voltage-independent potassium channel activated by intracellular calcium. Activation is followed by membrane hyperpolarization. Thought to regulate neuronal excitability by contributing to the slow component of synaptic afterhyperpolarization. The channel is blocked by apamin. The sequence is that of Small conductance calcium-activated potassium channel protein from Drosophila melanogaster (Fruit fly).